The sequence spans 454 residues: Apyrase (454 aa).

Residues 1 to 7 lie on the Cytoplasmic side of the membrane; sequence MLNQNSH. The helical; Signal-anchor for type II membrane protein transmembrane segment at 8-28 threads the bilayer; the sequence is FIFIILAIFLVLPLSLLSKNV. Residues 29–454 are Extracellular-facing; sequence NAQIPLRRHL…TTNKIRVASS (426 aa). 48-58 contacts ATP; sequence VIFDAGSTGSR. Asn151 is a glycosylation site (N-linked (GlcNAc...) asparagine). Residue Glu170 is the Proton acceptor of the active site. 194–204 serves as a coordination point for ATP; sequence ATIDLGGGSVQ. An N-linked (GlcNAc...) asparagine glycan is attached at Asn262.

It belongs to the GDA1/CD39 NTPase family. Ca(2+) serves as cofactor. Post-translationally, the N-terminus is blocked.

The protein resides in the membrane. The catalysed reaction is a ribonucleoside 5'-triphosphate + 2 H2O = a ribonucleoside 5'-phosphate + 2 phosphate + 2 H(+). In terms of biological role, catalyzes the hydrolysis of phosphoanhydride bonds of nucleoside tri- and di-phosphates. The chain is Apyrase (RROP1) from Solanum tuberosum (Potato).